A 491-amino-acid chain; its full sequence is Cytochrome P450 2B4 (491 aa).

Serine 128 carries the phosphoserine; by PKA modification. Residue cysteine 436 coordinates heme.

This sequence belongs to the cytochrome P450 family. Heme serves as cofactor.

The protein localises to the endoplasmic reticulum membrane. It localises to the microsome membrane. The enzyme catalyses an organic molecule + reduced [NADPH--hemoprotein reductase] + O2 = an alcohol + oxidized [NADPH--hemoprotein reductase] + H2O + H(+). Cytochromes P450 are a group of heme-thiolate monooxygenases. In liver microsomes, this enzyme is involved in an NADPH-dependent electron transport pathway. It oxidizes a variety of structurally unrelated compounds, including steroids, fatty acids, and xenobiotics. In the epoxidation of arachidonic acid it has a unique preference for the 5,6-olefin. In Oryctolagus cuniculus (Rabbit), this protein is Cytochrome P450 2B4 (CYP2B4).